Reading from the N-terminus, the 293-residue chain is Probable rRNA-processing protein EBP2 homolog (293 aa).

The span at Met1 to Glu37 shows a compositional bias: acidic residues. Disordered regions lie at residues Met1–Pro45 and Ile150–Arg293. A coiled-coil region spans residues His135 to Lys190. Basic and acidic residues-rich tracts occupy residues Ile150–Lys167, Lys173–Lys189, and Lys247–Phe256. The segment covering Ser265–Asp275 has biased composition (polar residues).

Belongs to the EBP2 family. Interacts with NSN1.

It localises to the nucleus. The protein resides in the nucleolus. In terms of biological role, required for the processing of the 27S pre-rRNA. Plays an important role in plant growth and senescence by modulating ribosome biogenesis in nucleolus. Associates with ribosomes. The polypeptide is Probable rRNA-processing protein EBP2 homolog (Arabidopsis thaliana (Mouse-ear cress)).